We begin with the raw amino-acid sequence, 138 residues long: Large ribosomal subunit protein uL16 (138 aa).

Residues 1–19 show a composition bias toward basic residues; that stretch reads MLIPKRVKYRRQHRPHRSG. A disordered region spans residues 1–24; it reads MLIPKRVKYRRQHRPHRSGVSKGG.

The protein belongs to the universal ribosomal protein uL16 family. Part of the 50S ribosomal subunit.

Functionally, binds 23S rRNA and is also seen to make contacts with the A and possibly P site tRNAs. The polypeptide is Large ribosomal subunit protein uL16 (Corynebacterium jeikeium (strain K411)).